A 239-amino-acid polypeptide reads, in one-letter code: Uridylate kinase (239 aa).

Lys-10–Gly-13 contacts ATP. An involved in allosteric activation by GTP region spans residues Gly-18–Gly-23. A UMP-binding site is contributed by Gly-52. The ATP site is built by Gly-53 and Arg-57. Residues Asp-72 and Thr-133–Thr-140 contribute to the UMP site. The ATP site is built by Thr-160, Tyr-166, and Asp-169.

The protein belongs to the UMP kinase family. As to quaternary structure, homohexamer.

It localises to the cytoplasm. The enzyme catalyses UMP + ATP = UDP + ADP. It functions in the pathway pyrimidine metabolism; CTP biosynthesis via de novo pathway; UDP from UMP (UMPK route): step 1/1. Allosterically activated by GTP. Inhibited by UTP. In terms of biological role, catalyzes the reversible phosphorylation of UMP to UDP. The chain is Uridylate kinase from Chlorobium chlorochromatii (strain CaD3).